The chain runs to 149 residues: Large-conductance mechanosensitive channel (149 aa).

Transmembrane regions (helical) follow at residues 16 to 36, 40 to 60, and 89 to 109; these read VMDL…VNSV, LIMP…KFIL, and GSFI…FMMV.

The protein belongs to the MscL family. Homopentamer.

The protein resides in the cell inner membrane. Its function is as follows. Channel that opens in response to stretch forces in the membrane lipid bilayer. May participate in the regulation of osmotic pressure changes within the cell. The chain is Large-conductance mechanosensitive channel from Paraburkholderia phymatum (strain DSM 17167 / CIP 108236 / LMG 21445 / STM815) (Burkholderia phymatum).